Here is a 297-residue protein sequence, read N- to C-terminus: Ribosomal RNA small subunit methyltransferase A (297 aa).

The S-adenosyl-L-methionine site is built by Asn-31, Leu-33, Gly-58, Glu-79, Asp-104, and Asn-129.

The protein belongs to the class I-like SAM-binding methyltransferase superfamily. rRNA adenine N(6)-methyltransferase family. RsmA subfamily.

The protein localises to the cytoplasm. The catalysed reaction is adenosine(1518)/adenosine(1519) in 16S rRNA + 4 S-adenosyl-L-methionine = N(6)-dimethyladenosine(1518)/N(6)-dimethyladenosine(1519) in 16S rRNA + 4 S-adenosyl-L-homocysteine + 4 H(+). Functionally, specifically dimethylates two adjacent adenosines (A1518 and A1519) in the loop of a conserved hairpin near the 3'-end of 16S rRNA in the 30S particle. May play a critical role in biogenesis of 30S subunits. The chain is Ribosomal RNA small subunit methyltransferase A from Staphylococcus aureus (strain Newman).